Consider the following 478-residue polypeptide: Amino acid oxidase imqH (478 aa).

A signal peptide spans 1 to 22 (MPAPKSIIIVGSGVFGLSTAHA). FAD-binding residues include Val-14, Phe-15, Asp-38, Asn-53, Ala-57, Asn-58, Arg-63, and Ile-64. Asn-97 and Asn-167 each carry an N-linked (GlcNAc...) asparagine glycan. Val-208 contacts FAD. S-8alpha-FAD cysteine is present on Cys-399. FAD contacts are provided by Phe-432 and Lys-433.

It belongs to the MSOX/MTOX family. In terms of assembly, dimer. It depends on FAD as a cofactor.

It functions in the pathway secondary metabolite biosynthesis. Its function is as follows. Nonribosomal peptide synthetase; part of the gene cluster that mediates the biosynthesis of imizoquins A to D, tripeptide-derived alkaloids that serve a protective role against oxidative stress that are essential for normal germination. ImqB is a canonical three-module NRPS that assembles the tripeptide backbone of the imizoquins via condensation of Trp, Tyr, and Leu-derived precursors. N-methylation by imqF and phenol oxidation by imqC, followed by cyclization via the FAD-dependent oxidase imqH carry out the three-step transformation of L-tyrosine into tetrahydroisoquinoline. Importantly, this sequence requires the presence of a free amine in the tyrosine moiety, indicating that isoquinoline formation occurs prior to peptide bond formation. The imidazolidin-4-one ring of imizoquins could form following additional oxidation of the methyl-derived bridgehead carbon by imqH. Lastly, O-methylation by imqG and leucine hydroxylation by imqE complete biosynthesis of the imizoquins. The sequence is that of Amino acid oxidase imqH from Aspergillus flavus (strain ATCC 200026 / FGSC A1120 / IAM 13836 / NRRL 3357 / JCM 12722 / SRRC 167).